Reading from the N-terminus, the 272-residue chain is Expansin-B16 (272 aa).

A signal peptide spans M1–A25. Residues G63–K173 enclose the Expansin-like EG45 domain. 3 cysteine pairs are disulfide-bonded: C66-C95, C98-C168, and C103-C109. Residues F186–S267 enclose the Expansin-like CBD domain.

The protein belongs to the expansin family. Expansin B subfamily.

The protein resides in the secreted. The protein localises to the cell wall. It is found in the membrane. In terms of biological role, may cause loosening and extension of plant cell walls by disrupting non-covalent bonding between cellulose microfibrils and matrix glucans. No enzymatic activity has been found. May be required for rapid internodal elongation in deepwater rice during submergence. The polypeptide is Expansin-B16 (EXPB16) (Oryza sativa subsp. japonica (Rice)).